Reading from the N-terminus, the 310-residue chain is tRNA uridine(34) hydroxylase (310 aa).

Residues Lys-127 to Asn-225 form the Rhodanese domain. Catalysis depends on Cys-185, which acts as the Cysteine persulfide intermediate.

It belongs to the TrhO family.

It catalyses the reaction uridine(34) in tRNA + AH2 + O2 = 5-hydroxyuridine(34) in tRNA + A + H2O. Its function is as follows. Catalyzes oxygen-dependent 5-hydroxyuridine (ho5U) modification at position 34 in tRNAs. In Prochlorococcus marinus (strain MIT 9312), this protein is tRNA uridine(34) hydroxylase.